The chain runs to 878 residues: MKKTTDKIRQDFLKFFKEKGHMIIPSSSLVPYNDSTLLFTNAGMNQFKEIFLGEKKSNYPRVATVQRCLRTGGKHNDLENVGYTSKHHTFFEMLGNFSFGDYFKKQAIEYAWELLTSKKWFNIPQNKLWISVYKDDTETYKIWNDIIKIPSERIIRIGDKNKEKYNSENFWQMGDTGPCGPCTEIFYDYSDTMKIDPIEFLENKNGRFVEIWNIVFIEFNRISKTKIISLKNKSIDTGMGLERISAVLQNVYSNYHIDVFQKLIKNIAQLSSINNLDHISFQVIADHIRSCSYIIADNILPSNEHRGYILRRIIRRALRHGHKIGIKKNFFHKLVSSVIHVMGKTGDILKEKQEKIENVLKIEEMQFSYTLEKGLKILNSEIEKIDNNILSGKTAFYLYDTFGFPIDLTSDVCREKNIKIDYNSYELAKEKQKEQSNINKKFYKNYNNNIILNDTCIFEGYTKTITRSLVKYIFVNNQSVSKIIKDEKGVIFLDKTPFYSESGGQIGDIGQLYHKKSSFLVEKTKKYGKTIGHIGKLISGQITLNDSLFSHIDEDYRYAIQLNHSATHLLHATLRKILGDSIVQKGSLVTNTYLRFDFSYVKSIDTSQIQKIENIINTNIRNNIKIKTEELNLEEAKKKKAMALFDDQYGSIVRVVFINNFSIELCGGTHTQRTGDIGLFKIISQSSVASGIKRIEAVTGQKAIDYLHEKDNYIKDISLLLNCSTVDIKEKTKKLTIKTKNLEKKIIQLQKKENTQYIKKILKNVTEIKGTKLLTNIFYDYEQKSLRMIVDQLKKELKNTIIILINIINNRFTIIVGVTRNLLDYITAIKIMEMIINKTNGKGGGKKEIAEGGGANTKQLPSILNTIKLWINDKLNEK.

Residues H564, H568, C666, and H670 each contribute to the Zn(2+) site.

This sequence belongs to the class-II aminoacyl-tRNA synthetase family. In terms of assembly, homotetramer. It depends on Zn(2+) as a cofactor.

The protein resides in the cytoplasm. The catalysed reaction is tRNA(Ala) + L-alanine + ATP = L-alanyl-tRNA(Ala) + AMP + diphosphate. Its function is as follows. Catalyzes the attachment of alanine to tRNA(Ala) in a two-step reaction: alanine is first activated by ATP to form Ala-AMP and then transferred to the acceptor end of tRNA(Ala). Also edits incorrectly charged Ser-tRNA(Ala) and Gly-tRNA(Ala) via its editing domain. In Buchnera aphidicola subsp. Acyrthosiphon pisum (strain APS) (Acyrthosiphon pisum symbiotic bacterium), this protein is Alanine--tRNA ligase.